The chain runs to 452 residues: Minor capsid protein (452 aa).

2 stretches are compositionally biased toward basic and acidic residues: residues 219-236 (VDKPEDKPKPVFDDKGKQ) and 247-258 (GKPDISKPGEKQ). The disordered stretch occupies residues 219–258 (VDKPEDKPKPVFDDKGKQPTDTVPPVDNGKPDISKPGEKQ).

It belongs to the closteroviridae minor capsid protein family.

Its subcellular location is the virion. Its function is as follows. Minor capsid protein that encapsidates the 5'-terminal portion of the viral genome. This Lettuce infectious yellows virus (isolate United States/92) (LIYV) protein is Minor capsid protein.